The chain runs to 189 residues: Translation initiation factor IF-3 (189 aa).

The protein belongs to the IF-3 family. Monomer.

The protein localises to the cytoplasm. IF-3 binds to the 30S ribosomal subunit and shifts the equilibrium between 70S ribosomes and their 50S and 30S subunits in favor of the free subunits, thus enhancing the availability of 30S subunits on which protein synthesis initiation begins. This chain is Translation initiation factor IF-3, found in Corynebacterium glutamicum (strain R).